The primary structure comprises 630 residues: Chaperone protein HtpG (630 aa).

An a; substrate-binding region spans residues 1-343; the sequence is MAKHQFQTEA…SKDLPLNVSR (343 aa). A b region spans residues 344-554; that stretch reads EILQSNAVMA…KEDPAFMMAQ (211 aa). Residues 555–630 are c; it reads IMKQMGQSGD…RLNRVIAKAI (76 aa).

This sequence belongs to the heat shock protein 90 family. As to quaternary structure, homodimer.

It localises to the cytoplasm. Functionally, molecular chaperone. Has ATPase activity. The sequence is that of Chaperone protein HtpG from Sulfurimonas denitrificans (strain ATCC 33889 / DSM 1251) (Thiomicrospira denitrificans (strain ATCC 33889 / DSM 1251)).